Consider the following 561-residue polypeptide: 2-methylisocitrate lyase, mitochondrial (561 aa).

The segment at 154-177 is disordered; that stretch reads KAQSMHDRKQWDTRRKMSPDERSK. Over residues 157–177 the composition is skewed to basic and acidic residues; sequence SMHDRKQWDTRRKMSPDERSK. The active site involves Cys228.

It belongs to the isocitrate lyase/PEP mutase superfamily. Isocitrate lyase family. It depends on Mg(2+) as a cofactor.

It localises to the mitochondrion matrix. It catalyses the reaction (2S,3R)-3-hydroxybutane-1,2,3-tricarboxylate = pyruvate + succinate. Its pathway is organic acid metabolism; propanoate degradation. Its function is as follows. Component of the methylcitrate cycle that catalyzes the formation of pyruvate and succinate from 2-methylisocitrate during the metabolism of endogenous propionyl-CoA. Plays an important role for growth and development, but also in antagonism, root colonization and induction of defense responses in plants. This is 2-methylisocitrate lyase, mitochondrial from Hypocrea atroviridis (strain ATCC 20476 / IMI 206040) (Trichoderma atroviride).